Consider the following 473-residue polypeptide: Photosystem II CP43 reaction center protein (473 aa).

A propeptide spanning residues 1–14 (MKTLYSLRRFYHVE) is cleaved from the precursor. Thr15 carries the post-translational modification N-acetylthreonine. Thr15 carries the phosphothreonine modification. Helical transmembrane passes span 69–93 (LFEV…PHLA), 134–155 (LLGP…KDRN), 178–200 (KALY…RKIT), 255–275 (KPFA…LSYS), and 291–312 (WFNN…ASQA). Glu367 is a [CaMn4O5] cluster binding site. A helical membrane pass occupies residues 447–471 (RARAAAAGFEKGIDRDFEPVLSMTP).

It belongs to the PsbB/PsbC family. PsbC subfamily. In terms of assembly, PSII is composed of 1 copy each of membrane proteins PsbA, PsbB, PsbC, PsbD, PsbE, PsbF, PsbH, PsbI, PsbJ, PsbK, PsbL, PsbM, PsbT, PsbX, PsbY, PsbZ, Psb30/Ycf12, at least 3 peripheral proteins of the oxygen-evolving complex and a large number of cofactors. It forms dimeric complexes. Binds multiple chlorophylls and provides some of the ligands for the Ca-4Mn-5O cluster of the oxygen-evolving complex. It may also provide a ligand for a Cl- that is required for oxygen evolution. PSII binds additional chlorophylls, carotenoids and specific lipids. serves as cofactor.

The protein resides in the plastid. The protein localises to the chloroplast thylakoid membrane. One of the components of the core complex of photosystem II (PSII). It binds chlorophyll and helps catalyze the primary light-induced photochemical processes of PSII. PSII is a light-driven water:plastoquinone oxidoreductase, using light energy to abstract electrons from H(2)O, generating O(2) and a proton gradient subsequently used for ATP formation. This Atropa belladonna (Belladonna) protein is Photosystem II CP43 reaction center protein.